Consider the following 602-residue polypeptide: Elongation factor 4 (602 aa).

In terms of domain architecture, tr-type G spans 2-184; that stretch reads KKIRNFAIIA…RIVRDIPPPK (183 aa). GTP is bound by residues 14–19 and 131–134; these read DHGKST and NKID.

It belongs to the TRAFAC class translation factor GTPase superfamily. Classic translation factor GTPase family. LepA subfamily.

It is found in the cell membrane. It carries out the reaction GTP + H2O = GDP + phosphate + H(+). In terms of biological role, required for accurate and efficient protein synthesis under certain stress conditions. May act as a fidelity factor of the translation reaction, by catalyzing a one-codon backward translocation of tRNAs on improperly translocated ribosomes. Back-translocation proceeds from a post-translocation (POST) complex to a pre-translocation (PRE) complex, thus giving elongation factor G a second chance to translocate the tRNAs correctly. Binds to ribosomes in a GTP-dependent manner. The sequence is that of Elongation factor 4 from Baumannia cicadellinicola subsp. Homalodisca coagulata.